The chain runs to 871 residues: Scavenger receptor class F member 2 (871 aa).

The disordered stretch occupies residues 1–20 (MEGAGPRGAGPARRRGAGGP). An N-terminal signal peptide occupies residues 1–43 (MEGAGPRGAGPARRRGAGGPPSPLLPSLLLLLLLWMLPDTVAP). Residues 44-441 (QELNPRGRNV…ACHLETNQRK (398 aa)) lie on the Extracellular side of the membrane. 6 consecutive EGF-like domains span residues 71–110 (QGDE…ANCD), 122–153 (CKEL…ARCE), 148–182 (WGAR…AQCA), 183–212 (SACY…RSCN), 213–241 (NQCA…ARCD), and 236–270 (FGAR…KYCR). 18 cysteine pairs are disulfide-bonded: Cys-75–Cys-86, Cys-80–Cys-98, Cys-100–Cys-109, Cys-126–Cys-134, Cys-128–Cys-141, Cys-143–Cys-152, Cys-156–Cys-163, Cys-158–Cys-170, Cys-172–Cys-181, Cys-185–Cys-193, Cys-187–Cys-200, Cys-202–Cys-211, Cys-215–Cys-222, Cys-217–Cys-229, Cys-231–Cys-240, Cys-244–Cys-251, Cys-246–Cys-258, and Cys-260–Cys-269. Asn-83 is a glycosylation site (N-linked (GlcNAc...) asparagine). Asn-310 and Asn-365 each carry an N-linked (GlcNAc...) asparagine glycan. The EGF-like 7 domain occupies 372 to 403 (CAFVCADCGSGHCDFQSGRCLCSPGVHGPHCN). 3 disulfides stabilise this stretch: Cys-376/Cys-384, Cys-379/Cys-391, and Cys-393/Cys-402. Asn-403 carries an N-linked (GlcNAc...) asparagine glycan. The chain crosses the membrane as a helical span at residues 442–462 (GVMGAGALLVLLVCLLLSLLG). At 463 to 871 (CCCACRGKDP…ELGRAGAPTL (409 aa)) the chain is on the cytoplasmic side. Residue Ser-551 is modified to Phosphoserine. Residues 570–579 (EAPAESRDPE) show a composition bias toward basic and acidic residues. The disordered stretch occupies residues 570–871 (EAPAESRDPE…ELGRAGAPTL (302 aa)). Ser-613 is modified (phosphoserine). A Phosphotyrosine modification is found at Tyr-628. Over residues 632–643 (ARREARPARARG) the composition is skewed to basic and acidic residues. A phosphoserine mark is found at Ser-651, Ser-653, Ser-710, Ser-718, and Ser-742. Over residues 705–725 (TPSDKSAHTVEHGSPRTRDPT) the composition is skewed to basic and acidic residues. Low complexity predominate over residues 821-831 (PPATETPGPEK). A compositionally biased stretch (basic residues) spans 844–856 (KKTPIQKPPRKKS). The span at 861 to 871 (GELGRAGAPTL) shows a compositional bias: low complexity.

In terms of assembly, homophilic and heterophilic interaction via its extracellular domain. Interacts with SCARF1. The heterophilic interaction with SCARF1, which is stronger than the homophilic interaction with itself, is suppressed by the presence of SCARF1 ligand such as Ac-LDL. As to expression, predominantly expressed in endothelial cells. Expressed in heart, placenta, lung, kidney, spleen, small intestine and ovary.

The protein resides in the membrane. Probable adhesion protein, which mediates homophilic and heterophilic interactions. In contrast to SCARF1, it poorly mediates the binding and degradation of acetylated low density lipoprotein (Ac-LDL). This chain is Scavenger receptor class F member 2 (SCARF2), found in Homo sapiens (Human).